The primary structure comprises 139 residues: MGFSSVVGATVMIIALLVCGAYLYVTMDSYYENVDEAYTTYYSHVHAKLNEKLVITDVKSSTSQTNITIYNNGSVVVEPDKFTILFDGTVVPEENISYYPKLKKYLVPLDSITIVVNWTQPSRICIVSDNGNKYFYSLT.

The first 18 residues, 1 to 18, serve as a signal peptide directing secretion; sequence MGFSSVVGATVMIIALLV. At cysteine 19 the chain carries N-acetylcysteine. A lipid anchor (S-archaeol cysteine) is attached at cysteine 19.

This sequence to M.voltae FlaF.

The protein localises to the archaeal flagellum. The protein resides in the membrane. This Methanocaldococcus jannaschii (strain ATCC 43067 / DSM 2661 / JAL-1 / JCM 10045 / NBRC 100440) (Methanococcus jannaschii) protein is Putative flagella-related protein F (flaF).